A 476-amino-acid polypeptide reads, in one-letter code: Proline dehydrogenase 2, mitochondrial (476 aa).

Residues 1 to 29 (MANRFLRPNLIHRFSTVSPVGPPTTIIPE) constitute a mitochondrion transit peptide.

The protein belongs to the proline oxidase family. It depends on FAD as a cofactor. As to expression, expressed in the vascular tissue and in the abscission zone of petals, sepals, stamina, pistils and siliques. Not detected in petioles.

The protein resides in the mitochondrion. It carries out the reaction L-proline + a quinone = (S)-1-pyrroline-5-carboxylate + a quinol + H(+). Its pathway is amino-acid degradation; L-proline degradation into L-glutamate; L-glutamate from L-proline: step 1/2. Converts proline to delta-1-pyrroline-5-carboxylate. This Arabidopsis thaliana (Mouse-ear cress) protein is Proline dehydrogenase 2, mitochondrial (POX2).